We begin with the raw amino-acid sequence, 61 residues long: Large ribosomal subunit protein bL28 (61 aa).

This sequence belongs to the bacterial ribosomal protein bL28 family.

The sequence is that of Large ribosomal subunit protein bL28 from Lacticaseibacillus paracasei (strain ATCC 334 / BCRC 17002 / CCUG 31169 / CIP 107868 / KCTC 3260 / NRRL B-441) (Lactobacillus paracasei).